Consider the following 288-residue polypeptide: Bifunctional protein FolD (288 aa).

Residues Gly166–Ser168 and Ile232 each bind NADP(+).

It belongs to the tetrahydrofolate dehydrogenase/cyclohydrolase family. In terms of assembly, homodimer.

It carries out the reaction (6R)-5,10-methylene-5,6,7,8-tetrahydrofolate + NADP(+) = (6R)-5,10-methenyltetrahydrofolate + NADPH. The enzyme catalyses (6R)-5,10-methenyltetrahydrofolate + H2O = (6R)-10-formyltetrahydrofolate + H(+). The protein operates within one-carbon metabolism; tetrahydrofolate interconversion. Catalyzes the oxidation of 5,10-methylenetetrahydrofolate to 5,10-methenyltetrahydrofolate and then the hydrolysis of 5,10-methenyltetrahydrofolate to 10-formyltetrahydrofolate. The protein is Bifunctional protein FolD of Erwinia tasmaniensis (strain DSM 17950 / CFBP 7177 / CIP 109463 / NCPPB 4357 / Et1/99).